The following is a 387-amino-acid chain: 3-ketoacyl-CoA thiolase (387 aa).

Cysteine 91 (acyl-thioester intermediate) is an active-site residue. Catalysis depends on proton acceptor residues histidine 343 and cysteine 373.

It belongs to the thiolase-like superfamily. Thiolase family. Heterotetramer of two alpha chains (FadB) and two beta chains (FadA).

The protein localises to the cytoplasm. It catalyses the reaction an acyl-CoA + acetyl-CoA = a 3-oxoacyl-CoA + CoA. It participates in lipid metabolism; fatty acid beta-oxidation. Catalyzes the final step of fatty acid oxidation in which acetyl-CoA is released and the CoA ester of a fatty acid two carbons shorter is formed. The chain is 3-ketoacyl-CoA thiolase from Escherichia coli O1:K1 / APEC.